The sequence spans 216 residues: Small ribosomal subunit protein uS2 (216 aa).

The protein belongs to the universal ribosomal protein uS2 family.

In Carsonella ruddii (strain PV), this protein is Small ribosomal subunit protein uS2.